An 83-amino-acid polypeptide reads, in one-letter code: Small ribosomal subunit protein bS16 (83 aa).

This sequence belongs to the bacterial ribosomal protein bS16 family.

In Polaromonas sp. (strain JS666 / ATCC BAA-500), this protein is Small ribosomal subunit protein bS16.